A 780-amino-acid chain; its full sequence is MSQVIQGAVEEPVYSNKSLTNENDSFLSLIESFSQERGVPIDINPKIGRKPILLYELYKKVIKRGGYDAVSATEDGWTNIAEEFNQSDPARSAGILQNVYFKYLISWEIHDHWHLLLPPPSTLELSENRQNVLERVKVFNSCSPPKPTNPITIIDNDKTHSFKKFYKSLVKEDEENGIEKKINEAMNSSASQPLPNSTNFASTTFPSVPFHPLPVDSGLQKYIDRNSNLTPPALGAGVPGPPLLVRVALALKSQQDKEVDWAIGHLIKISFERHQEFKLERLPSLAECLVYSLGFQVTKAKQVSDLTDISLCMDRAIGIALVLRNSVLSVENAKHVAQTKLVISVLEASIRCAKTFNNLEFLHYCLDISEMISSYLHVEDEKNVFYLALCEFLNSSDYSILIATLRTLARLALNDRNNRLLQDLKSNVIANIIALVETDNEEIVAAALDFLYQYTTYRTNTSNLLASQEAWMLVDQLIRLMMYQAQERFMTVTIENSESNPAVKHEATSSISLPMEELQQLVAMREPERSVKWMRCCFEPSSDDYVLQTDIWQLYCSDMERAQGPNVMGISPADFIKVSSHAFYNARAMTVSTPQLPVEYVINGIKRRKFPTSVNGMRYQPCRWCLDSGKECGELLLGTPLLHSHLQEMHIFPQILETGKCRWSDCKYEIQRLTPASELSHYQLLSHIVTHLHDDSLETLVEGRKLSPSREFRIPLLLTAVDDQGDATGIALTATLVLRNLVRSKQGKMLFSAIESRVLEVSSLNPAVAPYVSEMLLGQI.

Residues 20 to 112 enclose the ARID domain; sequence TNENDSFLSL…YLISWEIHDH (93 aa). At threonine 230 the chain carries Phosphothreonine. A DNA-binding region (RFX-type winged-helix) is located at residues 530-609; that stretch reads SVKWMRCCFE…YVINGIKRRK (80 aa). The residue at position 696 (serine 696) is a Phosphoserine.

It belongs to the RSC9 family. Component of the RSC complex composed of at least arp9, arp42, rsc1, rsc4, rsc7, rsc9, rsc58, sfh1, snf21, ssr1, ssr2, ssr3 and ssr4. The complex interacts with histone and histone variant components of centromeric chromatin.

The protein localises to the cytoplasm. The protein resides in the nucleus. Component of the chromatin structure remodeling complex (RSC), which is involved in transcription regulation and nucleosome positioning. Controls particularly membrane and organelle development genes. This is Chromatin structure-remodeling complex subunit rsc9 (rsc9) from Schizosaccharomyces pombe (strain 972 / ATCC 24843) (Fission yeast).